The primary structure comprises 548 residues: Probable 2,3-bisphosphoglycerate-independent phosphoglycerate mutase (548 aa).

Residues Asp20 and Ser73 each coordinate Mn(2+). Catalysis depends on Ser73, which acts as the Phosphoserine intermediate. Residues His134, 164–165 (RD), Arg200, Arg207, 279–282 (RGDR), and Lys354 contribute to the substrate site. Residues Asp422, His426, Asp463, His464, and His493 each contribute to the Mn(2+) site.

The protein belongs to the BPG-independent phosphoglycerate mutase family. As to quaternary structure, monomer. Mn(2+) serves as cofactor.

The enzyme catalyses (2R)-2-phosphoglycerate = (2R)-3-phosphoglycerate. Its pathway is carbohydrate degradation; glycolysis; pyruvate from D-glyceraldehyde 3-phosphate: step 3/5. Catalyzes the interconversion of 2-phosphoglycerate and 3-phosphoglycerate. The protein is Probable 2,3-bisphosphoglycerate-independent phosphoglycerate mutase (gpmI) of Leptospira interrogans serogroup Icterohaemorrhagiae serovar copenhageni (strain Fiocruz L1-130).